We begin with the raw amino-acid sequence, 294 residues long: Acetyl-coenzyme A carboxylase carboxyl transferase subunit beta (294 aa).

One can recognise a CoA carboxyltransferase N-terminal domain in the interval 25–294; sequence VWTKCTSCEQ…PLVVPVDGSH (270 aa). Zn(2+) contacts are provided by cysteine 29, cysteine 32, cysteine 48, and cysteine 51. The C4-type zinc finger occupies 29–51; it reads CTSCEQVLYSAELERNLEVCPKC.

The protein belongs to the AccD/PCCB family. Acetyl-CoA carboxylase is a heterohexamer composed of biotin carboxyl carrier protein (AccB), biotin carboxylase (AccC) and two subunits each of ACCase subunit alpha (AccA) and ACCase subunit beta (AccD). Zn(2+) serves as cofactor.

It localises to the cytoplasm. The enzyme catalyses N(6)-carboxybiotinyl-L-lysyl-[protein] + acetyl-CoA = N(6)-biotinyl-L-lysyl-[protein] + malonyl-CoA. The protein operates within lipid metabolism; malonyl-CoA biosynthesis; malonyl-CoA from acetyl-CoA: step 1/1. Component of the acetyl coenzyme A carboxylase (ACC) complex. Biotin carboxylase (BC) catalyzes the carboxylation of biotin on its carrier protein (BCCP) and then the CO(2) group is transferred by the transcarboxylase to acetyl-CoA to form malonyl-CoA. This is Acetyl-coenzyme A carboxylase carboxyl transferase subunit beta from Aliivibrio fischeri (strain MJ11) (Vibrio fischeri).